Here is a 98-residue protein sequence, read N- to C-terminus: Small ribosomal subunit protein bS21B (98 aa).

Positions 61-98 (KLQREGLLPMKPKPVFGAGAGGERGGRGGPGAGPRGPR) are disordered. A compositionally biased stretch (gly residues) spans 78–98 (AGAGGERGGRGGPGAGPRGPR).

It belongs to the bacterial ribosomal protein bS21 family.

This is Small ribosomal subunit protein bS21B from Bradyrhizobium diazoefficiens (strain JCM 10833 / BCRC 13528 / IAM 13628 / NBRC 14792 / USDA 110).